The following is a 679-amino-acid chain: tRNA uridine 5-carboxymethylaminomethyl modification enzyme MnmG (679 aa).

Residue 15–20 (GAGHAG) coordinates FAD. 314–328 (GPRYCPSIEDKIVRF) is a binding site for NAD(+).

The protein belongs to the MnmG family. In terms of assembly, homodimer. Heterotetramer of two MnmE and two MnmG subunits. FAD serves as cofactor.

It is found in the cytoplasm. Its function is as follows. NAD-binding protein involved in the addition of a carboxymethylaminomethyl (cmnm) group at the wobble position (U34) of certain tRNAs, forming tRNA-cmnm(5)s(2)U34. The polypeptide is tRNA uridine 5-carboxymethylaminomethyl modification enzyme MnmG (Roseiflexus sp. (strain RS-1)).